The sequence spans 318 residues: Ubiquitin-like domain-containing CTD phosphatase 1 (318 aa).

The Ubiquitin-like domain maps to 3 to 81 (LSLIIKWGGQ…IMMMGTREES (79 aa)). An FCP1 homology domain is found at 133–294 (PREGKKLLVL…VKLSQYLKEI (162 aa)). Positions 143, 145, and 253 each coordinate Mg(2+).

Requires Mg(2+) as cofactor.

It localises to the nucleus. The enzyme catalyses O-phospho-L-seryl-[protein] + H2O = L-seryl-[protein] + phosphate. It carries out the reaction O-phospho-L-threonyl-[protein] + H2O = L-threonyl-[protein] + phosphate. In terms of biological role, dephosphorylates 26S nuclear proteasomes, thereby decreasing their proteolytic activity. Recruited to the 19S regulatory particle of the 26S proteasome where it dephosphorylates 19S component psmc2 which impairs psmc2 ATPase activity and disrupts 26S proteasome assembly. Has also been reported to stimulate the proteolytic activity of the 26S proteasome. The sequence is that of Ubiquitin-like domain-containing CTD phosphatase 1 (ublcp1) from Xenopus laevis (African clawed frog).